A 375-amino-acid polypeptide reads, in one-letter code: Succinyl-diaminopimelate desuccinylase (375 aa).

His66 serves as a coordination point for Zn(2+). Asp68 is a catalytic residue. Position 99 (Asp99) interacts with Zn(2+). Residue Glu133 is the Proton acceptor of the active site. Zn(2+) contacts are provided by Glu134, Glu162, and His348.

The protein belongs to the peptidase M20A family. DapE subfamily. In terms of assembly, homodimer. It depends on Zn(2+) as a cofactor. Co(2+) serves as cofactor.

It carries out the reaction N-succinyl-(2S,6S)-2,6-diaminopimelate + H2O = (2S,6S)-2,6-diaminopimelate + succinate. It participates in amino-acid biosynthesis; L-lysine biosynthesis via DAP pathway; LL-2,6-diaminopimelate from (S)-tetrahydrodipicolinate (succinylase route): step 3/3. In terms of biological role, catalyzes the hydrolysis of N-succinyl-L,L-diaminopimelic acid (SDAP), forming succinate and LL-2,6-diaminopimelate (DAP), an intermediate involved in the bacterial biosynthesis of lysine and meso-diaminopimelic acid, an essential component of bacterial cell walls. This is Succinyl-diaminopimelate desuccinylase from Yersinia enterocolitica serotype O:8 / biotype 1B (strain NCTC 13174 / 8081).